The chain runs to 307 residues: UDP-3-O-acyl-N-acetylglucosamine deacetylase (307 aa).

Positions 78, 241, and 245 each coordinate Zn(2+). His-268 serves as the catalytic Proton donor.

Belongs to the LpxC family. The cofactor is Zn(2+).

It catalyses the reaction a UDP-3-O-[(3R)-3-hydroxyacyl]-N-acetyl-alpha-D-glucosamine + H2O = a UDP-3-O-[(3R)-3-hydroxyacyl]-alpha-D-glucosamine + acetate. Its pathway is glycolipid biosynthesis; lipid IV(A) biosynthesis; lipid IV(A) from (3R)-3-hydroxytetradecanoyl-[acyl-carrier-protein] and UDP-N-acetyl-alpha-D-glucosamine: step 2/6. Its function is as follows. Catalyzes the hydrolysis of UDP-3-O-myristoyl-N-acetylglucosamine to form UDP-3-O-myristoylglucosamine and acetate, the committed step in lipid A biosynthesis. The protein is UDP-3-O-acyl-N-acetylglucosamine deacetylase of Bordetella avium (strain 197N).